The chain runs to 126 residues: Large ribosomal subunit protein bL12 (126 aa).

It belongs to the bacterial ribosomal protein bL12 family. As to quaternary structure, homodimer. Part of the ribosomal stalk of the 50S ribosomal subunit. Forms a multimeric L10(L12)X complex, where L10 forms an elongated spine to which 2 to 4 L12 dimers bind in a sequential fashion. Binds GTP-bound translation factors.

Its function is as follows. Forms part of the ribosomal stalk which helps the ribosome interact with GTP-bound translation factors. Is thus essential for accurate translation. The protein is Large ribosomal subunit protein bL12 of Nitrosococcus oceani (strain ATCC 19707 / BCRC 17464 / JCM 30415 / NCIMB 11848 / C-107).